The following is a 151-amino-acid chain: Ribosome maturation factor RimP (151 aa).

It belongs to the RimP family.

The protein resides in the cytoplasm. Its function is as follows. Required for maturation of 30S ribosomal subunits. The chain is Ribosome maturation factor RimP from Hydrogenovibrio crunogenus (strain DSM 25203 / XCL-2) (Thiomicrospira crunogena).